Here is a 160-residue protein sequence, read N- to C-terminus: Putative lipoprotein YfiB (160 aa).

A signal peptide spans 1–18; it reads MIKHLVAPLVFTSLILTG. Cys-19 carries N-palmitoyl cysteine lipidation. Cys-19 carries S-diacylglycerol cysteine lipidation. The 118-residue stretch at 43 to 160 folds into the OmpA-like domain; that stretch reads AGDWSLGLSD…RRVAVVITTP (118 aa).

Belongs to the outer membrane OOP (TC 1.B.6) superfamily.

Its subcellular location is the cell membrane. The protein is Putative lipoprotein YfiB (yfiB) of Escherichia coli (strain K12).